Consider the following 327-residue polypeptide: Glutamyl endopeptidase (327 aa).

Residues Met-1–Ala-29 form the signal peptide. A propeptide spanning residues Leu-30–Asn-68 is cleaved from the precursor. Residues Lys-33–Leu-61 are disordered. Positions Gln-40–Lys-54 are enriched in low complexity. Catalysis depends on charge relay system residues His-119, Asp-161, and Ser-237. Residues Phe-283–Ala-327 form a disordered region. A compositionally biased stretch (low complexity) spans Asp-286 to Ala-327. Repeat copies occupy residues Pro-289–Asn-291, Pro-292–Asn-294, Pro-295–Asn-297, Pro-298–Asn-300, Pro-301–Asn-303, Pro-304–Asn-306, Pro-307–Asn-309, Pro-310–Asn-312, and Pro-313–Asn-315. The tract at residues Pro-289–Asn-315 is 9 X 3 AA repeats of P-[DN]-N.

The protein belongs to the peptidase S1B family. In terms of processing, proteolytically cleaved by aureolysin (aur). This cleavage leads to the activation of SspA.

The protein localises to the secreted. It catalyses the reaction Preferential cleavage: Glu-|-Xaa, Asp-|-Xaa.. Functionally, preferentially cleaves peptide bonds on the carboxyl-terminal side of aspartate and glutamate. Along with other extracellular proteases it is involved in colonization and infection of human tissues. Required for proteolytic maturation of thiol protease SspB and inactivation of SspC, an inhibitor of SspB. It is the most important protease for degradation of fibronectin-binding protein (FnBP) and surface protein A, which are involved in adherence to host cells. May also protect bacteria against host defense mechanism by cleaving the immunoglobulin classes IgG, IgA and IgM. May be involved in the stability of secreted lipases. This Staphylococcus aureus (strain MW2) protein is Glutamyl endopeptidase (sspA).